The primary structure comprises 429 residues: Phosphoribosylamine--glycine ligase (429 aa).

The 208-residue stretch at 109–316 folds into the ATP-grasp domain; sequence KDFLARHKIP…LVELCLAACE (208 aa). ATP is bound at residue 135–196; that stretch reads LREKGAPIVI…EEFLDGEEAS (62 aa). Positions 212 to 236 are disordered; the sequence is SQDHKRVGDKDTGPNTGGMGAYSPA. The segment covering 213–223 has biased composition (basic and acidic residues); that stretch reads QDHKRVGDKDT. 2 residues coordinate Mg(2+): glutamate 286 and asparagine 288.

Belongs to the GARS family. Monomer. Mg(2+) is required as a cofactor. It depends on Mn(2+) as a cofactor.

It carries out the reaction 5-phospho-beta-D-ribosylamine + glycine + ATP = N(1)-(5-phospho-beta-D-ribosyl)glycinamide + ADP + phosphate + H(+). Its pathway is purine metabolism; IMP biosynthesis via de novo pathway; N(1)-(5-phospho-D-ribosyl)glycinamide from 5-phospho-alpha-D-ribose 1-diphosphate: step 2/2. Functionally, catalyzes the reversible conversion of phosphoribosylamine to glycinamide ribonucleotide, an enzymatic step in purine biosynthesis pathway. This Escherichia coli (strain K12) protein is Phosphoribosylamine--glycine ligase (purD).